The chain runs to 93 residues: Small ribosomal subunit protein uS19 (93 aa).

Belongs to the universal ribosomal protein uS19 family.

Its function is as follows. Protein S19 forms a complex with S13 that binds strongly to the 16S ribosomal RNA. The protein is Small ribosomal subunit protein uS19 of Clostridium perfringens (strain ATCC 13124 / DSM 756 / JCM 1290 / NCIMB 6125 / NCTC 8237 / Type A).